We begin with the raw amino-acid sequence, 677 residues long: DNA ligase (677 aa).

NAD(+) contacts are provided by residues 35–39 (DAVYD), 84–85 (SL), and Glu-115. The N6-AMP-lysine intermediate role is filled by Lys-117. Positions 138, 177, 296, and 320 each coordinate NAD(+). 4 residues coordinate Zn(2+): Cys-414, Cys-417, Cys-432, and Cys-437. The BRCT domain occupies 599-677 (NGILKLNGKT…ETQLLEILEE (79 aa)).

Belongs to the NAD-dependent DNA ligase family. LigA subfamily. It depends on Mg(2+) as a cofactor. Requires Mn(2+) as cofactor.

The enzyme catalyses NAD(+) + (deoxyribonucleotide)n-3'-hydroxyl + 5'-phospho-(deoxyribonucleotide)m = (deoxyribonucleotide)n+m + AMP + beta-nicotinamide D-nucleotide.. DNA ligase that catalyzes the formation of phosphodiester linkages between 5'-phosphoryl and 3'-hydroxyl groups in double-stranded DNA using NAD as a coenzyme and as the energy source for the reaction. It is essential for DNA replication and repair of damaged DNA. The sequence is that of DNA ligase from Nostoc sp. (strain PCC 7120 / SAG 25.82 / UTEX 2576).